Reading from the N-terminus, the 212-residue chain is Octanoyltransferase (212 aa).

Residues 30–205 (ETTVDELWCL…ELVEGLGHSQ (176 aa)) form the BPL/LPL catalytic domain. Substrate is bound by residues 69 to 76 (RGGQVTYH), 136 to 138 (SLG), and 149 to 151 (GLA). Cys-167 (acyl-thioester intermediate) is an active-site residue.

Belongs to the LipB family.

The protein localises to the cytoplasm. It carries out the reaction octanoyl-[ACP] + L-lysyl-[protein] = N(6)-octanoyl-L-lysyl-[protein] + holo-[ACP] + H(+). The protein operates within protein modification; protein lipoylation via endogenous pathway; protein N(6)-(lipoyl)lysine from octanoyl-[acyl-carrier-protein]: step 1/2. Catalyzes the transfer of endogenously produced octanoic acid from octanoyl-acyl-carrier-protein onto the lipoyl domains of lipoate-dependent enzymes. Lipoyl-ACP can also act as a substrate although octanoyl-ACP is likely to be the physiological substrate. The sequence is that of Octanoyltransferase from Marinobacter nauticus (strain ATCC 700491 / DSM 11845 / VT8) (Marinobacter aquaeolei).